The primary structure comprises 224 residues: 2-C-methyl-D-erythritol 4-phosphate cytidylyltransferase (224 aa).

Belongs to the IspD/TarI cytidylyltransferase family. IspD subfamily.

It catalyses the reaction 2-C-methyl-D-erythritol 4-phosphate + CTP + H(+) = 4-CDP-2-C-methyl-D-erythritol + diphosphate. It participates in isoprenoid biosynthesis; isopentenyl diphosphate biosynthesis via DXP pathway; isopentenyl diphosphate from 1-deoxy-D-xylulose 5-phosphate: step 2/6. Functionally, catalyzes the formation of 4-diphosphocytidyl-2-C-methyl-D-erythritol from CTP and 2-C-methyl-D-erythritol 4-phosphate (MEP). The protein is 2-C-methyl-D-erythritol 4-phosphate cytidylyltransferase of Bordetella petrii (strain ATCC BAA-461 / DSM 12804 / CCUG 43448).